The sequence spans 357 residues: GTPase Obg (357 aa).

Residues 1–159 form the Obg domain; that stretch reads MKFVDEAFID…RNLKLELKVL (159 aa). Residues 160–334 enclose the OBG-type G domain; sequence ADVGLLGMPN…LVQSIFQHVH (175 aa). Residues 166–173, 191–195, 213–216, 284–287, and 315–317 each bind GTP; these read GMPNAGKS, FTTLH, DIPG, NKLD, and SAL. Mg(2+) contacts are provided by S173 and T193.

The protein belongs to the TRAFAC class OBG-HflX-like GTPase superfamily. OBG GTPase family. As to quaternary structure, monomer. It depends on Mg(2+) as a cofactor.

The protein resides in the cytoplasm. In terms of biological role, an essential GTPase which binds GTP, GDP and possibly (p)ppGpp with moderate affinity, with high nucleotide exchange rates and a fairly low GTP hydrolysis rate. Plays a role in control of the cell cycle, stress response, ribosome biogenesis and in those bacteria that undergo differentiation, in morphogenesis control. This Acidovorax ebreus (strain TPSY) (Diaphorobacter sp. (strain TPSY)) protein is GTPase Obg.